A 466-amino-acid polypeptide reads, in one-letter code: Coagulation factor VII (466 aa).

A signal peptide spans 1-20 (MVSQALRLLCLLLGLQGCLA). The propeptide occupies 21–60 (AGGVAKASGGETRDMPWKPGPHRVFVTQEEAHGVLHRRRR). Residues 61–105 (ANAFLEELRPGSLERECKEEQCSFEEAREIFKDAERTKLFWISYS) form the Gla domain. 4-carboxyglutamate occurs at positions 66, 67, 74, 76, 79, 80, 85, 86, 89, and 95. A disulfide bond links cysteine 77 and cysteine 82. Residues 106–142 (DGDQCASSPCQNGGSCKDQLQSYICFCLPAFEGRNCE) enclose the EGF-like 1; calcium-binding domain. 10 disulfides stabilise this stretch: cysteine 110-cysteine 121, cysteine 115-cysteine 130, cysteine 132-cysteine 141, cysteine 151-cysteine 162, cysteine 158-cysteine 172, cysteine 174-cysteine 187, cysteine 195-cysteine 322, cysteine 219-cysteine 224, cysteine 238-cysteine 254, and cysteine 370-cysteine 389. An O-linked (Glc...) serine; alternate glycan is attached at serine 112. Serine 112 carries an O-linked (Xyl...) serine; alternate glycan. Residue serine 120 is glycosylated (O-linked (Fuc) serine). (3R)-3-hydroxyaspartate is present on aspartate 123. Residues 147–188 (DQLICVNENGGCEQYCSDHTGTKRSCRCHEGYSLLADGVSCT) form the EGF-like 2 domain. N-linked (GlcNAc...) asparagine glycosylation occurs at asparagine 205. A Peptidase S1 domain is found at 213-452 (IVGGKVCPKG…YIEWLQKLMR (240 aa)). Catalysis depends on charge relay system residues histidine 253 and aspartate 302. Asparagine 382 is a glycosylation site (N-linked (GlcNAc...) asparagine). A substrate-binding site is contributed by aspartate 398. An intrachain disulfide couples cysteine 400 to cysteine 428. The Charge relay system role is filled by serine 404.

Belongs to the peptidase S1 family. As to quaternary structure, heterodimer of a light chain and a heavy chain linked by a disulfide bond. Interacts (activated) with iripin-8, a serine protease inhibitor from Ixodes ricinus saliva. The vitamin K-dependent, enzymatic carboxylation of some glutamate residues allows the modified protein to bind calcium. Post-translationally, the iron and 2-oxoglutarate dependent 3-hydroxylation of aspartate and asparagine is (R) stereospecific within EGF domains. In terms of processing, O- and N-glycosylated. N-glycosylation at Asn-205 occurs cotranslationally and is mediated by STT3A-containing complexes, while glycosylation at Asn-382 is post-translational and is mediated STT3B-containing complexes before folding. O-fucosylated by POFUT1 on a conserved serine or threonine residue found in the consensus sequence C2-X(4,5)-[S/T]-C3 of EGF domains, where C2 and C3 are the second and third conserved cysteines. Can be either O-glucosylated or O-xylosylated at Ser-112 by POGLUT1 in vitro. Plasma.

It is found in the secreted. It carries out the reaction Selective cleavage of Arg-|-Ile bond in factor X to form factor Xa.. In terms of biological role, initiates the extrinsic pathway of blood coagulation. Serine protease that circulates in the blood in a zymogen form. Factor VII is converted to factor VIIa by factor Xa, factor XIIa, factor IXa, or thrombin by minor proteolysis. In the presence of tissue factor and calcium ions, factor VIIa then converts factor X to factor Xa by limited proteolysis. Factor VIIa also converts factor IX to factor IXa in the presence of tissue factor and calcium. The chain is Coagulation factor VII (F7) from Homo sapiens (Human).